Reading from the N-terminus, the 522-residue chain is MSALSESPAIPSFWRPETSEISKKPRPNTTVGFQFDNRNVGTSAPSTPAIRRNNTDSFERGLSLPLPSSKQDTGSSVLDPDGDAYVNRYARPVTAGSIYIPSNYHKSFSPNTFSGFNVKRSASKSPKRSANGSTSEDISIEGSPSETAKGARSSFNSNFRTFDIGSERRRRILEASQDSSRPGRYSYRTKSASPALIDTSTLDSRLNFTMGRLERSIAQLSKNTMRAVSHLENPPKDITLPKLNVKNSAWPLQPYSPPANETPASSSSSAKARPVSVPDMSSPVPASSVEYESLKAAVTYSPSQNPKKVAETDSESRKSSFQSSYNDADRPFQVGAQTQSTPNRISRSDSPIVYDVDTHSEDNASTASSEAISQSMRSFQPQPNTGSPFPRFTSTNTEDEQESDIPQSDANDSTVNLNQPNYANLTPTPQVSPKRPTYSRSSPLPSASVPALGDGSPDPPAAPSIQNSLSVHESEMPPHVTRDYTQPAASATPVPKEKPSEKSEKPPKKKGSKLEKFCCILM.

Disordered regions lie at residues Met1–Asp83, Lys119–Asn158, Arg170–Ala192, Pro251–Pro285, and Tyr300–Lys516. 3 stretches are compositionally biased toward polar residues: residues Pro27–Ser46, Leu66–Ser76, and Asn131–Glu146. Phosphoserine is present on Ser43. A compositionally biased stretch (low complexity) spans Pro258 to Pro285. Ser303 is modified (phosphoserine). Basic and acidic residues predominate over residues Lys308–Lys318. Residues Gly335–Asp349 show a composition bias toward polar residues. Phosphoserine is present on Ser350. Composition is skewed to polar residues over residues Asn363–Asn396 and Asp404–Val431. Residues Ser439–Leu452 show a composition bias toward low complexity. 2 stretches are compositionally biased toward basic and acidic residues: residues His472–Arg482 and Pro495–Lys516.

In terms of assembly, interacts with tea1 and tea3.

It is found in the cell membrane. Its function is as follows. With tea1, acts in a positive-feedback loop in the microtubule-mediated regulation of cell polarity. Involved in the anchoring of tea1 at the cortex as well as the correct localization of tea3. This is Cell polarity protein mod5 (mod5) from Schizosaccharomyces pombe (strain 972 / ATCC 24843) (Fission yeast).